The primary structure comprises 61 residues: Metallothionein-1D (61 aa).

The segment at 1–29 (MDPNCSCSTGGSCSCATSCTCKACRCTSC) is beta. Cysteine 5, cysteine 7, cysteine 13, cysteine 15, cysteine 19, cysteine 21, cysteine 24, cysteine 26, cysteine 29, cysteine 33, cysteine 34, cysteine 36, cysteine 37, cysteine 41, cysteine 44, cysteine 48, cysteine 50, cysteine 57, cysteine 59, and cysteine 60 together coordinate a divalent metal cation. Residues 30 to 61 (KKSCCSCCPAGCAKCAQGCICKGASDKCSCCA) form an alpha region.

Belongs to the metallothionein superfamily. Type 1 family. As to quaternary structure, monomer.

Functionally, metallothioneins have a high content of cysteine residues that bind various heavy metals; these proteins are transcriptionally regulated by both heavy metals and glucocorticoids. This chain is Metallothionein-1D (MT1D), found in Sus scrofa (Pig).